A 555-amino-acid polypeptide reads, in one-letter code: Glucose-6-phosphate isomerase (555 aa).

Glu-360 (proton donor) is an active-site residue. Catalysis depends on residues His-391 and Lys-519.

Belongs to the GPI family.

The protein localises to the cytoplasm. It carries out the reaction alpha-D-glucose 6-phosphate = beta-D-fructose 6-phosphate. It functions in the pathway carbohydrate biosynthesis; gluconeogenesis. The protein operates within carbohydrate degradation; glycolysis; D-glyceraldehyde 3-phosphate and glycerone phosphate from D-glucose: step 2/4. Functionally, catalyzes the reversible isomerization of glucose-6-phosphate to fructose-6-phosphate. This Acinetobacter baumannii (strain AB307-0294) protein is Glucose-6-phosphate isomerase.